The sequence spans 368 residues: Phospho-N-acetylmuramoyl-pentapeptide-transferase (368 aa).

9 helical membrane-spanning segments follow: residues 23–43, 72–92, 94–114, 139–159, 170–190, 201–221, 238–258, 265–286, and 345–365; these read YITF…LVFG, IPTM…LLWA, IAEP…AVGF, VALG…SVLL, ITVD…TAVS, GLAA…AYLT, AGEV…FLWF, VFMG…ALLI, and KIVI…LLTL.

The protein belongs to the glycosyltransferase 4 family. MraY subfamily. Requires Mg(2+) as cofactor.

It localises to the cell inner membrane. It catalyses the reaction UDP-N-acetyl-alpha-D-muramoyl-L-alanyl-gamma-D-glutamyl-meso-2,6-diaminopimeloyl-D-alanyl-D-alanine + di-trans,octa-cis-undecaprenyl phosphate = di-trans,octa-cis-undecaprenyl diphospho-N-acetyl-alpha-D-muramoyl-L-alanyl-D-glutamyl-meso-2,6-diaminopimeloyl-D-alanyl-D-alanine + UMP. It functions in the pathway cell wall biogenesis; peptidoglycan biosynthesis. Catalyzes the initial step of the lipid cycle reactions in the biosynthesis of the cell wall peptidoglycan: transfers peptidoglycan precursor phospho-MurNAc-pentapeptide from UDP-MurNAc-pentapeptide onto the lipid carrier undecaprenyl phosphate, yielding undecaprenyl-pyrophosphoryl-MurNAc-pentapeptide, known as lipid I. The sequence is that of Phospho-N-acetylmuramoyl-pentapeptide-transferase from Chloroherpeton thalassium (strain ATCC 35110 / GB-78).